We begin with the raw amino-acid sequence, 360 residues long: Aminomethyltransferase (360 aa).

Belongs to the GcvT family. In terms of assembly, the glycine cleavage system is composed of four proteins: P, T, L and H.

It carries out the reaction N(6)-[(R)-S(8)-aminomethyldihydrolipoyl]-L-lysyl-[protein] + (6S)-5,6,7,8-tetrahydrofolate = N(6)-[(R)-dihydrolipoyl]-L-lysyl-[protein] + (6R)-5,10-methylene-5,6,7,8-tetrahydrofolate + NH4(+). In terms of biological role, the glycine cleavage system catalyzes the degradation of glycine. The protein is Aminomethyltransferase of Methylococcus capsulatus (strain ATCC 33009 / NCIMB 11132 / Bath).